We begin with the raw amino-acid sequence, 298 residues long: Cyclin-dependent kinase 2 homolog (298 aa).

The Protein kinase domain occupies 4–284 (YHKMEKIGEG…AKEALKHDYF (281 aa)). ATP contacts are provided by residues 10 to 18 (IGEGTYGVV) and Lys32. The residue at position 14 (Thr14) is a Phosphothreonine. Tyr15 bears the Phosphotyrosine mark. The Proton acceptor role is filled by Asp125. Residue Thr158 is modified to Phosphothreonine.

Belongs to the protein kinase superfamily. CMGC Ser/Thr protein kinase family. CDC2/CDKX subfamily. May form a complex composed of at least the catalytic subunit CRK2 and a cyclin. Requires Mg(2+) as cofactor.

Its subcellular location is the cytoplasm. The catalysed reaction is L-seryl-[protein] + ATP = O-phospho-L-seryl-[protein] + ADP + H(+). The enzyme catalyses L-threonyl-[protein] + ATP = O-phospho-L-threonyl-[protein] + ADP + H(+). It carries out the reaction [DNA-directed RNA polymerase] + ATP = phospho-[DNA-directed RNA polymerase] + ADP + H(+). With respect to regulation, phosphorylation at Thr-14 or Tyr-15 inactivates the enzyme, while phosphorylation at Thr-158 activates it. Serine/threonine-protein kinase. Involved in the control of the cell cycle. Required for entry into S-phase and mitosis. Probable component of the kinase complex that phosphorylates the repetitive C-terminus of RNA polymerase II. This Theileria parva (East coast fever infection agent) protein is Cyclin-dependent kinase 2 homolog.